The sequence spans 1099 residues: Mediator of RNA polymerase II transcription subunit 5 (1099 aa).

The disordered stretch occupies residues aspartate 41–proline 66.

It belongs to the Mediator complex subunit 5 family. As to quaternary structure, component of the Mediator complex.

Its subcellular location is the nucleus. Functionally, component of the Mediator complex, a coactivator involved in the regulated transcription of nearly all RNA polymerase II-dependent genes. Mediator functions as a bridge to convey information from gene-specific regulatory proteins to the basal RNA polymerase II transcription machinery. Mediator is recruited to promoters by direct interactions with regulatory proteins and serves as a scaffold for the assembly of a functional preinitiation complex with RNA polymerase II and the general transcription factors. This is Mediator of RNA polymerase II transcription subunit 5 (NUT1) from Candida glabrata (strain ATCC 2001 / BCRC 20586 / JCM 3761 / NBRC 0622 / NRRL Y-65 / CBS 138) (Yeast).